The sequence spans 268 residues: 4-hydroxy-tetrahydrodipicolinate reductase (268 aa).

An NAD(+)-binding site is contributed by 7 to 12; it reads GANGRM. An NADP(+)-binding site is contributed by R34. NAD(+) contacts are provided by residues 97–99 and 121–124; these read GTT and SENM. H155 (proton donor/acceptor) is an active-site residue. H156 provides a ligand contact to (S)-2,3,4,5-tetrahydrodipicolinate. K159 serves as the catalytic Proton donor. Position 165-166 (165-166) interacts with (S)-2,3,4,5-tetrahydrodipicolinate; sequence GT.

The protein belongs to the DapB family.

Its subcellular location is the cytoplasm. It catalyses the reaction (S)-2,3,4,5-tetrahydrodipicolinate + NAD(+) + H2O = (2S,4S)-4-hydroxy-2,3,4,5-tetrahydrodipicolinate + NADH + H(+). The catalysed reaction is (S)-2,3,4,5-tetrahydrodipicolinate + NADP(+) + H2O = (2S,4S)-4-hydroxy-2,3,4,5-tetrahydrodipicolinate + NADPH + H(+). The protein operates within amino-acid biosynthesis; L-lysine biosynthesis via DAP pathway; (S)-tetrahydrodipicolinate from L-aspartate: step 4/4. Its function is as follows. Catalyzes the conversion of 4-hydroxy-tetrahydrodipicolinate (HTPA) to tetrahydrodipicolinate. The polypeptide is 4-hydroxy-tetrahydrodipicolinate reductase (Bartonella bacilliformis (strain ATCC 35685 / KC583 / Herrer 020/F12,63)).